The following is a 497-amino-acid chain: MGSLEMVPMGAGPPSPGGDPDGYDGGNNSQYPSASGSSGNTPTPPNDEERESNEEPPPPYEDPYWGNGDRHSDYQPLGTQDQSLYLGLQHDGNDGLPPPPYSPRDDSSQHIYEEAGRGSMNPVCLPVIVAPYLFWLAAIAASCFTASVSTVVTATGLALSLLLLAAVASSYAAAQRKLLTPVTVLTAVVTFFAICLTWRIEDPPFNSLLFALLAAAGGLQGIYVLVMLVLLILAYRRRWRRLTVCGGIMFLACVLVLIVDAVLQLSPLLGAVTVVSMTLLLLAFVLWLSSPGGLGTLGAALLTLAAALALLASLILGTLNLTTMFLLMLLWTLVVLLICSSCSSCPLSKILLARLFLYALALLLLASALIAGGSILQTNFKSLSSTEFIPNLFCMLLLIVAGILFILAILTEWGSGNRTYGPVFMCLGGLLTMVAGAVWLTVMSNTLLSAWILTAGFLIFLIGFALFGVIRCCRYCCYYCLTLESEERPPTPYRNTV.

Residues 1–108 (MGSLEMVPMG…PPYSPRDDSS (108 aa)) are disordered. Over 1-123 (MGSLEMVPMG…EAGRGSMNPV (123 aa)) the chain is Cytoplasmic. The segment covering 27–41 (NNSQYPSASGSSGNT) has biased composition (polar residues). Positions 97 to 101 (PPPPY) match the PPxY motif motif. Position 112 is a phosphotyrosine; by host (Tyr-112). Residues 124 to 144 (CLPVIVAPYLFWLAAIAASCF) traverse the membrane as a helical segment. Over 145–147 (TAS) the chain is Extracellular. The helical transmembrane segment at 148–168 (VSTVVTATGLALSLLLLAAVA) threads the bilayer. Residues 169–177 (SSYAAAQRK) are Cytoplasmic-facing. Residues 178-198 (LLTPVTVLTAVVTFFAICLTW) form a helical membrane-spanning segment. The Extracellular segment spans residues 199 to 211 (RIEDPPFNSLLFA). Residues 212–232 (LLAAAGGLQGIYVLVMLVLLI) traverse the membrane as a helical segment. Residues 233–241 (LAYRRRWRR) are Cytoplasmic-facing. A helical transmembrane segment spans residues 242–262 (LTVCGGIMFLACVLVLIVDAV). The Extracellular segment spans residues 263–267 (LQLSP). A helical transmembrane segment spans residues 268–288 (LLGAVTVVSMTLLLLAFVLWL). At 289–296 (SSPGGLGT) the chain is on the cytoplasmic side. A helical membrane pass occupies residues 297–317 (LGAALLTLAAALALLASLILG). Residue Thr-318 is a topological domain, extracellular. The chain crosses the membrane as a helical span at residues 319 to 339 (LNLTTMFLLMLLWTLVVLLIC). Over 340–354 (SSCSSCPLSKILLAR) the chain is Cytoplasmic. Residues 355–375 (LFLYALALLLLASALIAGGSI) traverse the membrane as a helical segment. Residues 376–388 (LQTNFKSLSSTEF) are Extracellular-facing. A helical membrane pass occupies residues 389–409 (IPNLFCMLLLIVAGILFILAI). Residues 410 to 422 (LTEWGSGNRTYGP) lie on the Cytoplasmic side of the membrane. Residues 423 to 443 (VFMCLGGLLTMVAGAVWLTVM) traverse the membrane as a helical segment. Over 444-449 (SNTLLS) the chain is Extracellular. The helical transmembrane segment at 450–470 (AWILTAGFLIFLIGFALFGVI) threads the bilayer. Over 471 to 497 (RCCRYCCYYCLTLESEERPPTPYRNTV) the chain is Cytoplasmic.

The protein belongs to the herpesviridae LMP-2 family. The cytoplasmic N-terminal domain interacts with human SRC family protein tyrosine kinases SYK and LYN. Binds human ITCH, WWP2 and NEDD4L. Phosphorylated on cytoplasmic N-terminal tyrosine residues, possibly by human LYN. In terms of processing, can be ubiquitinated by human ITCH and WWP2 on the N-terminus in a lysine-independent manner.

The protein resides in the host cell membrane. The protein localises to the host endomembrane system. Its subcellular location is the host cytoplasm. It localises to the host perinuclear region. In terms of biological role, maintains EBV latent infection of B-lymphocyte, by preventing lytic reactivation of the virus in response to surface immunoglobulin (sIg) cross-linking. Acts like a dominant negative inhibitor of the sIg-associated protein tyrosine kinases, LYN and SYK. Also blocks translocation of the B-cell antigen receptor (BCR) into lipid rafts, preventing the subsequent signaling and accelerated internalization of the BCR upon BCR cross-linking. Serves as a molecular scaffold to recruit SYK, LYN and E3 protein-ubiquitin ligases, such as ITCH and NEDD4L, leading to ubiquitination and potential degradation of both tyrosines kinases. Possesses a constitutive signaling activity in non-transformed cells, inducing bypass of normal B lymphocyte developmental checkpoints allowing immunoglobulin-negative cells to colonize peripheral lymphoid organs. Its function is as follows. May be a negative regulator of isoform LMP2A. The polypeptide is Latent membrane protein 2 (LMP2) (Epstein-Barr virus (strain B95-8) (HHV-4)).